A 122-amino-acid polypeptide reads, in one-letter code: Hydrogenase maturation factor HypA (122 aa).

His2 is a binding site for Ni(2+). Positions 73, 75, 95, and 98 each coordinate Zn(2+).

It belongs to the HypA/HybF family.

In terms of biological role, involved in the maturation of [NiFe] hydrogenases. Required for nickel insertion into the metal center of the hydrogenase. This chain is Hydrogenase maturation factor HypA, found in Methanothermobacter thermautotrophicus (strain ATCC 29096 / DSM 1053 / JCM 10044 / NBRC 100330 / Delta H) (Methanobacterium thermoautotrophicum).